Consider the following 222-residue polypeptide: DnaJ homolog subfamily B member 9 (222 aa).

Positions 1–23 (MATPQSVFVFAICILMITELILA) are cleaved as a signal peptide. The J domain maps to 26–90 (SYYDILGVPK…HRRKEYDTVG (65 aa)). Positions 91 to 222 (HTAFTNGKGQ…VTTYTDCSGQ (132 aa)) are divergent targeting domain. Residue serine 133 is modified to Phosphoserine.

Interacts with HSPA5/BiP; interaction is direct. Interacts with ERN1/IRE1 (via the luminal region). Interacts with DERL1.

The protein localises to the endoplasmic reticulum lumen. In terms of biological role, co-chaperone for Hsp70 protein HSPA5/BiP that acts as a key repressor of the ERN1/IRE1-mediated unfolded protein response (UPR). J domain-containing co-chaperones stimulate the ATPase activity of Hsp70 proteins and are required for efficient substrate recognition by Hsp70 proteins. In the unstressed endoplasmic reticulum, interacts with the luminal region of ERN1/IRE1 and selectively recruits HSPA5/BiP: HSPA5/BiP disrupts the dimerization of the active ERN1/IRE1 luminal region, thereby inactivating ERN1/IRE1. Also involved in endoplasmic reticulum-associated degradation (ERAD) of misfolded proteins. Required for survival of B-cell progenitors and normal antibody production. In Cricetulus griseus (Chinese hamster), this protein is DnaJ homolog subfamily B member 9.